Consider the following 663-residue polypeptide: DNA topoisomerase 1 (663 aa).

The region spanning 4–137 (SWLIITEKDN…TVKVDRVRYS (134 aa)) is the Toprim domain. The Mg(2+) site is built by Glu-10 and Asp-106. The Topo IA-type catalytic domain maps to 155-558 (DFNLANAALA…ESREMLLQIL (404 aa)). Positions 193–198 (SVGRVQ) are interaction with DNA. Tyr-306 (O-(5'-phospho-DNA)-tyrosine intermediate) is an active-site residue. The C4-type 1 zinc-finger motif lies at 583 to 610 (CPECGGELVVRQSKAGKRFIGCSNYPDC). Residues 629-653 (CKEHEIKEVKIRTKKGYWNLGCPYC) form a C4-type 2; atypical zinc finger.

This sequence belongs to the type IA topoisomerase family. Monomer. The cofactor is Mg(2+).

It carries out the reaction ATP-independent breakage of single-stranded DNA, followed by passage and rejoining.. Functionally, releases the supercoiling and torsional tension of DNA, which is introduced during the DNA replication and transcription, by transiently cleaving and rejoining one strand of the DNA duplex. Introduces a single-strand break via transesterification at a target site in duplex DNA. The scissile phosphodiester is attacked by the catalytic tyrosine of the enzyme, resulting in the formation of a DNA-(5'-phosphotyrosyl)-enzyme intermediate and the expulsion of a 3'-OH DNA strand. The free DNA strand then undergoes passage around the unbroken strand, thus removing DNA supercoils. Finally, in the religation step, the DNA 3'-OH attacks the covalent intermediate to expel the active-site tyrosine and restore the DNA phosphodiester backbone. The polypeptide is DNA topoisomerase 1 (Archaeoglobus fulgidus (strain ATCC 49558 / DSM 4304 / JCM 9628 / NBRC 100126 / VC-16)).